Consider the following 614-residue polypeptide: Probable LRR receptor-like serine/threonine-protein kinase At5g45780 (614 aa).

Positions 1–26 (MEISLMKFLFLGIWVYYYSVLDSVSA) are cleaved as a signal peptide. Over 27–242 (MDSLLSPKGV…NSKHHSLVLS (216 aa)) the chain is Extracellular. LRR repeat units follow at residues 104 to 126 (HLHTLLLQNNQLTGPIPSELGQL), 128 to 151 (ELETLDLSGNRFSGEIPASLGFLT), 152 to 174 (HLNYLRLSRNLLSGQVPHLVAGL), and 176 to 197 (GLSFLDLSFNNLSGPTPNISAK). N-linked (GlcNAc...) asparagine glycosylation is found at Asn186, Asn193, and Asn224. Residues 243–263 (FAFGIVVAFIISLMFLFFWVL) traverse the membrane as a helical segment. At 264-614 (WHRSRLSRSH…IEAIELSGPR (351 aa)) the chain is on the cytoplasmic side. Phosphothreonine is present on Thr297. In terms of domain architecture, Protein kinase spans 300 to 576 (FSPKNILGQG…QVLKVLEGLV (277 aa)). An ATP-binding site is contributed by 306–314 (LGQGGFGMV). Thr323 is modified (phosphothreonine). ATP is bound at residue Lys328. The residue at position 380 (Ser380) is a Phosphoserine. The Proton acceptor role is filled by Asp426. A phosphothreonine mark is found at Thr459, Thr460, and Thr465. Tyr473 is subject to Phosphotyrosine. Ser475 carries the phosphoserine modification. Position 476 is a phosphothreonine (Thr476). Ser480 carries the post-translational modification Phosphoserine. Thr555 is subject to Phosphothreonine.

It belongs to the protein kinase superfamily. Ser/Thr protein kinase family.

The protein resides in the membrane. The catalysed reaction is L-seryl-[protein] + ATP = O-phospho-L-seryl-[protein] + ADP + H(+). It catalyses the reaction L-threonyl-[protein] + ATP = O-phospho-L-threonyl-[protein] + ADP + H(+). The protein is Probable LRR receptor-like serine/threonine-protein kinase At5g45780 of Arabidopsis thaliana (Mouse-ear cress).